Here is a 227-residue protein sequence, read N- to C-terminus: Probable methylthioribulose-1-phosphate dehydratase (227 aa).

Cys-87 lines the substrate pocket. Residues His-105 and His-107 each coordinate Zn(2+). The active-site Proton donor/acceptor is the Glu-129. Residue His-185 coordinates Zn(2+).

It belongs to the aldolase class II family. MtnB subfamily. It depends on Zn(2+) as a cofactor.

The protein localises to the cytoplasm. The enzyme catalyses 5-(methylsulfanyl)-D-ribulose 1-phosphate = 5-methylsulfanyl-2,3-dioxopentyl phosphate + H2O. It functions in the pathway amino-acid biosynthesis; L-methionine biosynthesis via salvage pathway; L-methionine from S-methyl-5-thio-alpha-D-ribose 1-phosphate: step 2/6. In terms of biological role, catalyzes the dehydration of methylthioribulose-1-phosphate (MTRu-1-P) into 2,3-diketo-5-methylthiopentyl-1-phosphate (DK-MTP-1-P). The protein is Probable methylthioribulose-1-phosphate dehydratase of Drosophila ananassae (Fruit fly).